A 137-amino-acid polypeptide reads, in one-letter code: Large ribosomal subunit protein uL16 (137 aa).

Belongs to the universal ribosomal protein uL16 family. Part of the 50S ribosomal subunit.

In terms of biological role, binds 23S rRNA and is also seen to make contacts with the A and possibly P site tRNAs. The sequence is that of Large ribosomal subunit protein uL16 from Marinomonas sp. (strain MWYL1).